Here is a 454-residue protein sequence, read N- to C-terminus: tRNA modification GTPase MnmE (454 aa).

The (6S)-5-formyl-5,6,7,8-tetrahydrofolate site is built by Arg23, Glu80, and Lys120. Residues 216–377 (GMKVVIAGRP…LRNHLKQSMG (162 aa)) form the TrmE-type G domain. Asn226 is a binding site for K(+). GTP is bound by residues 226–231 (NAGKSS), 245–251 (TDIAGTT), 270–273 (DTAG), 335–338 (NKAD), and 358–360 (SAR). Ser230 contributes to the Mg(2+) binding site. Residues Thr245, Ile247, and Thr250 each coordinate K(+). Thr251 serves as a coordination point for Mg(2+). (6S)-5-formyl-5,6,7,8-tetrahydrofolate is bound at residue Lys454.

Belongs to the TRAFAC class TrmE-Era-EngA-EngB-Septin-like GTPase superfamily. TrmE GTPase family. As to quaternary structure, homodimer. Heterotetramer of two MnmE and two MnmG subunits. K(+) is required as a cofactor.

It localises to the cytoplasm. Its function is as follows. Exhibits a very high intrinsic GTPase hydrolysis rate. Involved in the addition of a carboxymethylaminomethyl (cmnm) group at the wobble position (U34) of certain tRNAs, forming tRNA-cmnm(5)s(2)U34. This chain is tRNA modification GTPase MnmE, found in Escherichia coli O17:K52:H18 (strain UMN026 / ExPEC).